A 419-amino-acid polypeptide reads, in one-letter code: Synaptosomal-associated protein 47 (419 aa).

T-SNARE coiled-coil homology domains are found at residues 109 to 171 and 356 to 418; these read AANP…LTEL and KDWP…MRKL.

This sequence belongs to the SVAP1 family. As to quaternary structure, associates with the BLOC-1 complex. Interacts with BLOC1S6. Forms a complex containing SNAP47, VAMP2 and STX1A.

Its subcellular location is the endomembrane system. It is found in the cytoplasm. The protein localises to the perinuclear region. Its function is as follows. May play a role in intracellular membrane fusion. The protein is Synaptosomal-associated protein 47 (Snap47) of Rattus norvegicus (Rat).